The sequence spans 79 residues: Cell division protein ZapB (79 aa).

Residues Met-1–Asp-78 are a coiled coil.

It belongs to the ZapB family. As to quaternary structure, homodimer. The ends of the coiled-coil dimer bind to each other, forming polymers. Interacts with FtsZ.

The protein resides in the cytoplasm. Functionally, non-essential, abundant cell division factor that is required for proper Z-ring formation. It is recruited early to the divisome by direct interaction with FtsZ, stimulating Z-ring assembly and thereby promoting cell division earlier in the cell cycle. Its recruitment to the Z-ring requires functional FtsA or ZipA. The protein is Cell division protein ZapB of Hamiltonella defensa subsp. Acyrthosiphon pisum (strain 5AT).